The primary structure comprises 521 residues: Interleukin-9 receptor (521 aa).

An N-terminal signal peptide occupies residues Met1–Val40. Residues Ser41–Pro270 are Extracellular-facing. Residues Asn117 and Asn156 are each glycosylated (N-linked (GlcNAc...) asparagine). Positions Pro149–Arg259 constitute a Fibronectin type-III domain. Residues Trp245–Ser249 carry the WSXWS motif motif. The chain crosses the membrane as a helical span at residues Gly271–Phe291. The Cytoplasmic portion of the chain corresponds to Lys292–Phe521. Positions Phe301 to Ala309 match the Box 1 motif motif. The segment at Trp413 to Asn439 is disordered. Positions Ser429 to Asn439 are enriched in low complexity.

Belongs to the type I cytokine receptor family. Type 4 subfamily. In terms of assembly, interacts with IL9.

The protein localises to the cell membrane. It is found in the secreted. In terms of biological role, plays an important role in the immune response against parasites by acting as a receptor of IL9. This Homo sapiens (Human) protein is Interleukin-9 receptor (IL9R).